Reading from the N-terminus, the 295-residue chain is Tyrosine recombinase XerC (295 aa).

The Core-binding (CB) domain maps to 1–85 (MLTALNRYWD…ALRRFLSFLV (85 aa)). The Tyr recombinase domain occupies 106–285 (HLPKNMDGEQ…NFQHLAEVYD (180 aa)). Active-site residues include Arg145, Lys169, His237, Arg240, and His263. Catalysis depends on Tyr272, which acts as the O-(3'-phospho-DNA)-tyrosine intermediate.

Belongs to the 'phage' integrase family. XerC subfamily. Forms a cyclic heterotetrameric complex composed of two molecules of XerC and two molecules of XerD.

Its subcellular location is the cytoplasm. Its function is as follows. Site-specific tyrosine recombinase, which acts by catalyzing the cutting and rejoining of the recombining DNA molecules. The XerC-XerD complex is essential to convert dimers of the bacterial chromosome into monomers to permit their segregation at cell division. It also contributes to the segregational stability of plasmids. This is Tyrosine recombinase XerC from Haemophilus influenzae (strain 86-028NP).